Consider the following 253-residue polypeptide: Phosphate import ATP-binding protein PstB (253 aa).

The 242-residue stretch at 7–248 folds into the ABC transporter domain; that stretch reads MHSKGLDFFY…PGNKQTEDYI (242 aa). 39–46 serves as a coordination point for ATP; sequence GPSGCGKS.

The protein belongs to the ABC transporter superfamily. Phosphate importer (TC 3.A.1.7) family. The complex is composed of two ATP-binding proteins (PstB), two transmembrane proteins (PstC and PstA) and a solute-binding protein (PstS).

Its subcellular location is the cell inner membrane. It catalyses the reaction phosphate(out) + ATP + H2O = ADP + 2 phosphate(in) + H(+). Its function is as follows. Part of the ABC transporter complex PstSACB involved in phosphate import. Responsible for energy coupling to the transport system. In Oleidesulfovibrio alaskensis (strain ATCC BAA-1058 / DSM 17464 / G20) (Desulfovibrio alaskensis), this protein is Phosphate import ATP-binding protein PstB.